A 671-amino-acid chain; its full sequence is K(+)-insensitive pyrophosphate-energized proton pump (671 aa).

Helical transmembrane passes span 3 to 23, 57 to 77, 79 to 99, 128 to 148, and 156 to 176; these read SLIF…AFFA, TIAV…DDGL, IAIG…IGMS, AVTG…FYIL, and VGFG…GGIF. Substrate is bound at residue lysine 178. Positions 181, 185, 208, and 211 each coordinate Mg(2+). The next 6 membrane-spanning stretches (helical) occupy residues 223 to 243, 249 to 269, 285 to 305, 310 to 330, 366 to 386, and 391 to 411; these read LFET…LIIG, ILYP…SVFF, GVGG…NSLM, LFYA…ITEY, LVPT…VGGA, and IGLY…GMIV. Aspartate 421 lines the Mg(2+) pocket. 4 helical membrane passes run 452 to 472, 490 to 510, 558 to 578, and 580 to 600; these read AVTK…LFAD, VVLA…AVTM, MAMP…ILGP, and ALAG…LMMD. Ca(2+)-binding residues include aspartate 607, aspartate 633, and aspartate 637. Lysine 640 contacts substrate. The helical transmembrane segment at 646–666 threads the bilayer; sequence ALNALIKVVNMVAILFSSLII.

This sequence belongs to the H(+)-translocating pyrophosphatase (TC 3.A.10) family. K(+)-insensitive subfamily. In terms of assembly, homodimer. It depends on Mg(2+) as a cofactor.

It is found in the cell membrane. It catalyses the reaction diphosphate + H2O + H(+)(in) = 2 phosphate + 2 H(+)(out). Its function is as follows. Proton pump that utilizes the energy of pyrophosphate hydrolysis as the driving force for proton movement across the membrane. Generates a proton motive force. This chain is K(+)-insensitive pyrophosphate-energized proton pump, found in Methanosarcina acetivorans (strain ATCC 35395 / DSM 2834 / JCM 12185 / C2A).